The primary structure comprises 325 residues: RepFIB replication protein A (325 aa).

Residues A279 to S298 form a disordered region.

It belongs to the initiator RepB protein family.

In terms of biological role, this protein is essential for plasmid replication; it is involved in copy control functions. In vitro, binds to the DNA repeat units, BCDD'D'', EFG and HIJ. The polypeptide is RepFIB replication protein A (repA) (Escherichia coli).